A 296-amino-acid polypeptide reads, in one-letter code: Probable AP endonuclease (296 aa).

A disulfide bridge links Cys16 with Cys20. Zn(2+) is bound by residues His78, His115, Glu142, His182, His218, Asp231, His233, and Glu271.

This sequence belongs to the AP endonuclease 2 family. Zn(2+) serves as cofactor.

It localises to the host nucleus. The protein resides in the host cytoplasm. The protein localises to the virion. In terms of biological role, endonuclease that plays a role in DNA repair. Cleaves phosphodiester bonds on the 5' side of apurinic or apyrimidinic sites (AP sites). In addition to endonuclease activity, the ASFV enzyme has a proofreading 3'-5' exonuclease activity that is considerably more efficient in the elimination of a mismatch than in that of a correctly paired base. Displays 3'-phosphatase and 3'-repair diesterase activities. The single nucleotide gaps generated by the AP endonuclease are filled by the viral AP endonuclease and DNA ligase. In Ornithodoros (relapsing fever ticks), this protein is Probable AP endonuclease.